Reading from the N-terminus, the 546-residue chain is Glucose-6-phosphate isomerase 1 (546 aa).

Glu-353 acts as the Proton donor in catalysis. Residues His-384 and Lys-512 contribute to the active site.

It belongs to the GPI family.

Its subcellular location is the cytoplasm. The catalysed reaction is alpha-D-glucose 6-phosphate = beta-D-fructose 6-phosphate. It functions in the pathway carbohydrate biosynthesis; gluconeogenesis. Its pathway is carbohydrate degradation; glycolysis; D-glyceraldehyde 3-phosphate and glycerone phosphate from D-glucose: step 2/4. Functionally, catalyzes the reversible isomerization of glucose-6-phosphate to fructose-6-phosphate. The polypeptide is Glucose-6-phosphate isomerase 1 (Colwellia psychrerythraea (strain 34H / ATCC BAA-681) (Vibrio psychroerythus)).